The sequence spans 397 residues: Acetate kinase 2 (397 aa).

Asn-10 lines the Mg(2+) pocket. Residue Lys-17 participates in ATP binding. Arg-90 provides a ligand contact to substrate. Catalysis depends on Asp-147, which acts as the Proton donor/acceptor. Residues His-207 to Gly-211, Asp-281 to Arg-283, and Gly-329 to Asn-333 each bind ATP. Glu-385 contributes to the Mg(2+) binding site.

It belongs to the acetokinase family. Homodimer. It depends on Mg(2+) as a cofactor. Requires Mn(2+) as cofactor.

It localises to the cytoplasm. The enzyme catalyses acetate + ATP = acetyl phosphate + ADP. The protein operates within metabolic intermediate biosynthesis; acetyl-CoA biosynthesis; acetyl-CoA from acetate: step 1/2. Catalyzes the formation of acetyl phosphate from acetate and ATP. Can also catalyze the reverse reaction. This Vibrio cholerae serotype O1 (strain ATCC 39315 / El Tor Inaba N16961) protein is Acetate kinase 2.